A 220-amino-acid polypeptide reads, in one-letter code: MTFAKIKFSAQIRLETGLHIGGSDAFAAIGAIDSPVIKDPITNIPIIPGSSLKGKMRTLLAKVYNEKVAEKPSDDSDILSRLFGNSKDKRFKMGRLIFRDAFLSNADELDSLGVRSYTEVKFENTIDRITAEANPRQIERAIRNSTFDFELIYEITDENENQVEEDFKVIRDGLKLLELDYLGGSGSRGYGKVAFEKLKATTVFGNYDVKTLNELLTAEV.

Belongs to the CRISPR-associated Csm3 family. As to quaternary structure, part of the Csm effector complex that includes at least Cas10(1), Csm2(3), Csm3(5), Csm4(1), Csm5(1) and mature crRNA. The Csm complex is elongated and slightly twisted with a maximal length of 215 Angstroms and a diameter of 75-80 Angstroms. It has been modeled to have a central protein filamant of Csm3 subunits along which the dsRNA helix of paired crRNA and target RNA binds. The filament is capped at one end by Cas10 and Csm4 and at the other end by Csm5; ssDNA is thought to bind to the N-terminal HD domain of Cas10. Csm with a precursor crRNA does not include Csm5, while Cas6, the enzyme probably involved in pre-crRNA processing, is found associated with a subset of the Csm complex. A metal cation is required as a cofactor.

Its activity is regulated as follows. Target ssRNase is inhibited by EDTA. Its function is as follows. CRISPR (clustered regularly interspaced short palindromic repeat) is an adaptive immune system that provides protection against mobile genetic elements (viruses, transposable elements and conjugative plasmids). CRISPR clusters contain spacers, sequences complementary to antecedent mobile elements, and target invading nucleic acids. CRISPR clusters are transcribed and processed into CRISPR RNA (crRNA). The type III-A Csm effector complex binds crRNA and acts as a crRNA-guided RNase, DNase and cyclic oligoadenylate synthase; binding of target RNA cognate to the crRNA is required for all activities. In a heterologous host this Csm effector complex restricts ssRNA phage MS2, suggesting it may target RNA viruses in vivo. In terms of biological role, csm functions as a non-specific ssDNase. Base-pairing between crRNA and target RNA to form a ternary Csm complex activates a ssDNase activity; target RNA cleavage suppresses the ssDNase, a temporal control that prevents uncontrolled DNA degradation. Viral RNA transcripts probably tether the Csm complex to the viral genome, recruiting Cas10 ssDNA activity which is able to degrade DNA in the transcription bubble, spatially controlling the DNase activity. This subunit has the target ssRNA endonuclease activity; it cleaves multiple sites in the target RNA at 6 nucleotide intervals. The number of cleavage sites in the target RNA correlates with the number of Csm3 subunits in the Csm effector complex. In the Csm complex target RNA and ssDNA are cleaved simultaneously, although RNase activity (of Csm3) is much faster. RNA cleavage by Csm3 is not required for ssDNase activity as Csm complex with inactive Csm3 still has ssDNase activity; however as the cleaved target RNA products dissociate away ssDNase activity decreases. In Streptococcus thermophilus, this protein is CRISPR system Cms endoribonuclease Csm3.